The sequence spans 406 residues: Cysteine desulfurase IscS (406 aa).

Residues 75-76 (AT), N155, Q183, and 203-205 (SSH) contribute to the pyridoxal 5'-phosphate site. K206 is subject to N6-(pyridoxal phosphate)lysine. Residue T243 participates in pyridoxal 5'-phosphate binding. C330 functions as the Cysteine persulfide intermediate in the catalytic mechanism. C330 lines the [2Fe-2S] cluster pocket.

The protein belongs to the class-V pyridoxal-phosphate-dependent aminotransferase family. NifS/IscS subfamily. In terms of assembly, homodimer. Forms a heterotetramer with IscU, interacts with other sulfur acceptors. It depends on pyridoxal 5'-phosphate as a cofactor.

The protein resides in the cytoplasm. The enzyme catalyses (sulfur carrier)-H + L-cysteine = (sulfur carrier)-SH + L-alanine. The protein operates within cofactor biosynthesis; iron-sulfur cluster biosynthesis. Master enzyme that delivers sulfur to a number of partners involved in Fe-S cluster assembly, tRNA modification or cofactor biosynthesis. Catalyzes the removal of elemental sulfur atoms from cysteine to produce alanine. Functions as a sulfur delivery protein for Fe-S cluster synthesis onto IscU, an Fe-S scaffold assembly protein, as well as other S acceptor proteins. The sequence is that of Cysteine desulfurase IscS from Glaesserella parasuis serovar 5 (strain SH0165) (Haemophilus parasuis).